A 231-amino-acid polypeptide reads, in one-letter code: A-type ATP synthase subunit D (231 aa).

The protein belongs to the V-ATPase D subunit family. As to quaternary structure, has multiple subunits with at least A(3), B(3), C, D, E, F, H, I and proteolipid K(x).

Its subcellular location is the cell membrane. Functionally, component of the A-type ATP synthase that produces ATP from ADP in the presence of a proton gradient across the membrane. In Methanobrevibacter smithii (strain ATCC 35061 / DSM 861 / OCM 144 / PS), this protein is A-type ATP synthase subunit D.